Reading from the N-terminus, the 899-residue chain is Valine--tRNA ligase (899 aa).

The 'HIGH' region signature appears at 60–70 (PNVTGVLHMGH). The short motif at 539–543 (KMSKS) is the 'KMSKS' region element. Lys-542 serves as a coordination point for ATP. Positions 827 to 898 (AGLIDLDEEQ…KQGLEKLAAL (72 aa)) form a coiled coil.

This sequence belongs to the class-I aminoacyl-tRNA synthetase family. ValS type 1 subfamily. As to quaternary structure, monomer.

The protein resides in the cytoplasm. The catalysed reaction is tRNA(Val) + L-valine + ATP = L-valyl-tRNA(Val) + AMP + diphosphate. Catalyzes the attachment of valine to tRNA(Val). As ValRS can inadvertently accommodate and process structurally similar amino acids such as threonine, to avoid such errors, it has a 'posttransfer' editing activity that hydrolyzes mischarged Thr-tRNA(Val) in a tRNA-dependent manner. This Syntrophotalea carbinolica (strain DSM 2380 / NBRC 103641 / GraBd1) (Pelobacter carbinolicus) protein is Valine--tRNA ligase.